Consider the following 248-residue polypeptide: Trypsin I-P38 (248 aa).

A signal peptide spans 1–15 (MKFLVLVAFLGVAVA). Positions 16–25 (FPISDEDDDK) are cleaved as a propeptide — activation peptide. One can recognise a Peptidase S1 domain in the interval 26–246 (IVGGYSCARS…YVSWIKTTMS (221 aa)). 6 cysteine pairs are disulfide-bonded: Cys32–Cys162, Cys50–Cys66, Cys134–Cys235, Cys141–Cys208, Cys173–Cys187, and Cys198–Cys222. The Charge relay system role is filled by His65. Ca(2+) is bound by residues Glu77, Asn79, and Glu87. Catalysis depends on Asp109, which acts as the Charge relay system. Catalysis depends on Ser202, which acts as the Charge relay system.

It belongs to the peptidase S1 family. Ca(2+) is required as a cofactor. In terms of tissue distribution, high levels are seen in the pancreas while lower levels are found in the liver, spleen and thymus.

The protein localises to the secreted. It is found in the extracellular space. It catalyses the reaction Preferential cleavage: Arg-|-Xaa, Lys-|-Xaa.. This chain is Trypsin I-P38, found in Gallus gallus (Chicken).